We begin with the raw amino-acid sequence, 301 residues long: Small ribosomal subunit protein uS2 (301 aa).

Belongs to the universal ribosomal protein uS2 family. As to quaternary structure, component of the small ribosomal subunit. Mature ribosomes consist of a small (40S) and a large (60S) subunit. The 40S subunit contains about 33 different proteins and 1 molecule of RNA (18S). The 60S subunit contains about 49 different proteins and 3 molecules of RNA (25S, 5.8S and 5S). Interacts with RPS21.

The protein localises to the cytoplasm. Its function is as follows. Required for the assembly and/or stability of the 40S ribosomal subunit. Required for the processing of the 20S rRNA-precursor to mature 18S rRNA in a late step of the maturation of 40S ribosomal subunits. This Ajellomyces dermatitidis (strain ER-3 / ATCC MYA-2586) (Blastomyces dermatitidis) protein is Small ribosomal subunit protein uS2.